We begin with the raw amino-acid sequence, 321 residues long: ATP-dependent 6-phosphofructokinase (321 aa).

Residue glycine 12 participates in ATP binding. Residues 22–26 (RGVVR) and 55–60 (RYSVSD) each bind ADP. ATP contacts are provided by residues 73–74 (RF) and 103–106 (GDGS). Mg(2+) is bound at residue aspartate 104. 127–129 (TID) serves as a coordination point for substrate. Residue aspartate 129 is the Proton acceptor of the active site. Arginine 156 contributes to the ADP binding site. Substrate contacts are provided by residues arginine 164 and 171–173 (MGR). ADP-binding positions include 187-189 (GCE), arginine 213, and 215-217 (KRH). Substrate contacts are provided by residues glutamate 224, arginine 245, and 251–254 (HIQR).

The protein belongs to the phosphofructokinase type A (PFKA) family. ATP-dependent PFK group I subfamily. Prokaryotic clade 'B1' sub-subfamily. In terms of assembly, homotetramer. Mg(2+) is required as a cofactor.

It localises to the cytoplasm. It carries out the reaction beta-D-fructose 6-phosphate + ATP = beta-D-fructose 1,6-bisphosphate + ADP + H(+). Its pathway is carbohydrate degradation; glycolysis; D-glyceraldehyde 3-phosphate and glycerone phosphate from D-glucose: step 3/4. Allosterically activated by ADP and other diphosphonucleosides, and allosterically inhibited by phosphoenolpyruvate. Its function is as follows. Catalyzes the phosphorylation of D-fructose 6-phosphate to fructose 1,6-bisphosphate by ATP, the first committing step of glycolysis. The protein is ATP-dependent 6-phosphofructokinase of Haemophilus influenzae (strain PittEE).